We begin with the raw amino-acid sequence, 376 residues long: Ribosomal RNA large subunit methyltransferase G (376 aa).

Belongs to the methyltransferase superfamily. RlmG family.

The protein resides in the cytoplasm. It carries out the reaction guanosine(1835) in 23S rRNA + S-adenosyl-L-methionine = N(2)-methylguanosine(1835) in 23S rRNA + S-adenosyl-L-homocysteine + H(+). Specifically methylates the guanine in position 1835 (m2G1835) of 23S rRNA. This chain is Ribosomal RNA large subunit methyltransferase G, found in Klebsiella pneumoniae subsp. pneumoniae (strain ATCC 700721 / MGH 78578).